Consider the following 84-residue polypeptide: Small ribosomal subunit protein uS17 (84 aa).

Belongs to the universal ribosomal protein uS17 family. In terms of assembly, part of the 30S ribosomal subunit.

One of the primary rRNA binding proteins, it binds specifically to the 5'-end of 16S ribosomal RNA. In Porphyromonas gingivalis (strain ATCC 33277 / DSM 20709 / CIP 103683 / JCM 12257 / NCTC 11834 / 2561), this protein is Small ribosomal subunit protein uS17.